Reading from the N-terminus, the 805-residue chain is Serine/threonine-protein kinase fused (805 aa).

One can recognise a Protein kinase domain in the interval 4–254 (YAVSSLVGQG…WTQLLCHPFV (251 aa)). ATP contacts are provided by residues 10-18 (VGQGSFGCV) and Lys-33. Residue Asp-125 is the Proton acceptor of the active site. The tract at residues 269 to 289 (KESPFTNPEAKVKSSKQSDPE) is disordered. Residues 278 to 287 (AKVKSSKQSD) are compositionally biased toward basic and acidic residues. Phosphoserine occurs at positions 422 and 429. The span at 447-456 (IATQEKHNQE) shows a compositional bias: basic and acidic residues. Positions 447–496 (IATQEKHNQENKPPAEAISYANSQPPQQQPQQLKHSMHSTNEEKLSSDNT) are disordered.

This sequence belongs to the protein kinase superfamily. Ser/Thr protein kinase family. In terms of tissue distribution, expressed in all imaginal disks, higher level in wing disk.

The catalysed reaction is L-seryl-[protein] + ATP = O-phospho-L-seryl-[protein] + ADP + H(+). It catalyses the reaction L-threonyl-[protein] + ATP = O-phospho-L-threonyl-[protein] + ADP + H(+). Probable serine/threonine-protein kinase; maternally required for correct patterning in the posterior part of each embryonic metamere. May be involved in control of cell division during metamorphosis and ovarian development. May interact with costal-2. This Drosophila melanogaster (Fruit fly) protein is Serine/threonine-protein kinase fused (fu).